The primary structure comprises 79 residues: Cyclotide phyb-A (79 aa).

A propeptide spanning residues 1 to 43 is cleaved from the precursor; that stretch reads MVGVNSLRSALYLIVLILFVQLTYFSDARVMDVDLSRAFLPLT. The cyclopeptide (Gly-Asn) cross-link spans 44–73; it reads GIGCGESCVWIPCVSAAIGCSCSNKICYRN. Intrachain disulfides connect cysteine 47–cysteine 63, cysteine 51–cysteine 65, and cysteine 56–cysteine 70. A propeptide spanning residues 74 to 79 is cleaved from the precursor; that stretch reads GIIPKK.

This is a cyclic peptide. In terms of processing, contains 3 disulfide bonds. In terms of tissue distribution, expressed in midvein, lamina and periphery of leaves (at protein level).

Probably participates in a plant defense mechanism. In Petunia hybrida (Petunia), this protein is Cyclotide phyb-A.